We begin with the raw amino-acid sequence, 242 residues long: NAD(P)H-quinone oxidoreductase subunit K (242 aa).

[4Fe-4S] cluster is bound by residues cysteine 60, cysteine 61, cysteine 125, and cysteine 156.

Belongs to the complex I 20 kDa subunit family. In terms of assembly, NDH-1 can be composed of about 15 different subunits; different subcomplexes with different compositions have been identified which probably have different functions. Requires [4Fe-4S] cluster as cofactor.

The protein localises to the cellular thylakoid membrane. The catalysed reaction is a plastoquinone + NADH + (n+1) H(+)(in) = a plastoquinol + NAD(+) + n H(+)(out). The enzyme catalyses a plastoquinone + NADPH + (n+1) H(+)(in) = a plastoquinol + NADP(+) + n H(+)(out). Its function is as follows. NDH-1 shuttles electrons from an unknown electron donor, via FMN and iron-sulfur (Fe-S) centers, to quinones in the respiratory and/or the photosynthetic chain. The immediate electron acceptor for the enzyme in this species is believed to be plastoquinone. Couples the redox reaction to proton translocation, and thus conserves the redox energy in a proton gradient. Cyanobacterial NDH-1 also plays a role in inorganic carbon-concentration. This is NAD(P)H-quinone oxidoreductase subunit K from Prochlorococcus marinus (strain SARG / CCMP1375 / SS120).